Consider the following 354-residue polypeptide: Carbamoyl phosphate synthase small chain (354 aa).

Positions 1–167 are CPSase; sequence MEAVLILEDG…KEPKIHKTAN (167 aa). L-glutamine-binding residues include S45, G219, and G221. The Glutamine amidotransferase type-1 domain maps to 171-354; the sequence is RCVLIDCGVK…DEMIKLKDRK (184 aa). C246 (nucleophile) is an active-site residue. L-glutamine contacts are provided by L247, Q250, N288, G290, and F291. Active-site residues include H330 and E332.

This sequence belongs to the CarA family. Composed of two chains; the small (or glutamine) chain promotes the hydrolysis of glutamine to ammonia, which is used by the large (or ammonia) chain to synthesize carbamoyl phosphate. Tetramer of heterodimers (alpha,beta)4.

It carries out the reaction hydrogencarbonate + L-glutamine + 2 ATP + H2O = carbamoyl phosphate + L-glutamate + 2 ADP + phosphate + 2 H(+). It catalyses the reaction L-glutamine + H2O = L-glutamate + NH4(+). It participates in amino-acid biosynthesis; L-arginine biosynthesis; carbamoyl phosphate from bicarbonate: step 1/1. The protein operates within pyrimidine metabolism; UMP biosynthesis via de novo pathway; (S)-dihydroorotate from bicarbonate: step 1/3. In terms of biological role, small subunit of the glutamine-dependent carbamoyl phosphate synthetase (CPSase). CPSase catalyzes the formation of carbamoyl phosphate from the ammonia moiety of glutamine, carbonate, and phosphate donated by ATP, constituting the first step of 2 biosynthetic pathways, one leading to arginine and/or urea and the other to pyrimidine nucleotides. The small subunit (glutamine amidotransferase) binds and cleaves glutamine to supply the large subunit with the substrate ammonia. This is Carbamoyl phosphate synthase small chain from Methanocaldococcus jannaschii (strain ATCC 43067 / DSM 2661 / JAL-1 / JCM 10045 / NBRC 100440) (Methanococcus jannaschii).